The sequence spans 359 residues: Glutamine synthetase (359 aa).

Residues 28–107 (VMAEYIWIDG…VLAACYTADG (80 aa)) enclose the GS beta-grasp domain. Residues 114-359 (HRDACAKLLE…GIITETMFEH (246 aa)) enclose the GS catalytic domain. The residue at position 273 (S273) is a Phosphoserine. T303 is subject to Phosphothreonine. S305 carries the post-translational modification Phosphoserine.

The protein belongs to the glutamine synthetase family. As to quaternary structure, homooctamer.

It is found in the cytoplasm. It catalyses the reaction L-glutamate + NH4(+) + ATP = L-glutamine + ADP + phosphate + H(+). This chain is Glutamine synthetase (gln1), found in Schizosaccharomyces pombe (strain 972 / ATCC 24843) (Fission yeast).